A 170-amino-acid polypeptide reads, in one-letter code: Ubiquitin-conjugating enzyme E2 J2-like (170 aa).

The UBC core domain occupies 15–165 (DCITRLKREF…NKTFCELFPY (151 aa)). C97 (glycyl thioester intermediate) is an active-site residue.

Belongs to the ubiquitin-conjugating enzyme family.

It carries out the reaction S-ubiquitinyl-[E1 ubiquitin-activating enzyme]-L-cysteine + [E2 ubiquitin-conjugating enzyme]-L-cysteine = [E1 ubiquitin-activating enzyme]-L-cysteine + S-ubiquitinyl-[E2 ubiquitin-conjugating enzyme]-L-cysteine.. It functions in the pathway protein modification; protein ubiquitination. In terms of biological role, catalyzes the covalent attachment of ubiquitin to other proteins. In Dictyostelium discoideum (Social amoeba), this protein is Ubiquitin-conjugating enzyme E2 J2-like.